The chain runs to 110 residues: NADH-quinone oxidoreductase subunit K (110 aa).

Helical transmembrane passes span L13–M33, I41–I61, and I73–Y93.

This sequence belongs to the complex I subunit 4L family. NDH-1 is composed of 14 different subunits. Subunits NuoA, H, J, K, L, M, N constitute the membrane sector of the complex.

It localises to the cell inner membrane. The catalysed reaction is a quinone + NADH + 5 H(+)(in) = a quinol + NAD(+) + 4 H(+)(out). Functionally, NDH-1 shuttles electrons from NADH, via FMN and iron-sulfur (Fe-S) centers, to quinones in the respiratory chain. The immediate electron acceptor for the enzyme in this species is believed to be ubiquinone. Couples the redox reaction to proton translocation (for every two electrons transferred, four hydrogen ions are translocated across the cytoplasmic membrane), and thus conserves the redox energy in a proton gradient. The protein is NADH-quinone oxidoreductase subunit K of Rickettsia felis (strain ATCC VR-1525 / URRWXCal2) (Rickettsia azadi).